Here is a 64-residue protein sequence, read N- to C-terminus: Defensin-like protein 41 (64 aa).

Residues 1-21 are disordered; that stretch reads MTQGKRKHPCDLKNPSKRAPP. 4 disulfide bridges follow: C10/C61, C24/C47, C33/C56, and C37/C58.

This sequence belongs to the DEFL family.

The sequence is that of Defensin-like protein 41 from Arabidopsis thaliana (Mouse-ear cress).